Consider the following 152-residue polypeptide: MYQAGVDFGTISLTPILHGVVATVLYFLVGAAVLVAGFLMVNLLTPGDLRRLVFIDRRPNAVVLAATMYVALAIVTIAAIYASSNQLAQGLIGVAVYGIVGVALQGVALVILEIAVPGRFREHIDAPALHPAVFATAVMLLAVAGVIAAALS.

A run of 4 helical transmembrane segments spans residues 21–41 (VATV…FLMV), 62–82 (VVLA…AIYA), 92–112 (IGVA…LVIL), and 131–151 (PAVF…AAAL).

Belongs to the UPF0719 family.

Its subcellular location is the cell membrane. The polypeptide is UPF0719 transmembrane protein MT2674.1 (Mycobacterium tuberculosis (strain CDC 1551 / Oshkosh)).